The sequence spans 303 residues: Recombination-associated protein RdgC (303 aa).

This sequence belongs to the RdgC family.

The protein localises to the cytoplasm. It localises to the nucleoid. Functionally, may be involved in recombination. This Edwardsiella ictaluri (strain 93-146) protein is Recombination-associated protein RdgC.